Consider the following 165-residue polypeptide: Protein SprT (165 aa).

The region spanning 22–163 is the SprT-like domain; it reads LAQANLKLDR…RCVHCGEPLV (142 aa). A Zn(2+)-binding site is contributed by His-78. Residue Glu-79 is part of the active site. Position 82 (His-82) interacts with Zn(2+).

This sequence belongs to the SprT family. The cofactor is Zn(2+).

It localises to the cytoplasm. This Salmonella paratyphi A (strain ATCC 9150 / SARB42) protein is Protein SprT.